Consider the following 451-residue polypeptide: Tubulin beta chain (451 aa).

Positions 11, 69, 138, 142, 143, 144, 204, and 226 each coordinate GTP. Glu69 is a binding site for Mg(2+). The interval Gln426–Tyr451 is disordered. Acidic residues predominate over residues Thr429–Tyr451.

Belongs to the tubulin family. Dimer of alpha and beta chains. A typical microtubule is a hollow water-filled tube with an outer diameter of 25 nm and an inner diameter of 15 nM. Alpha-beta heterodimers associate head-to-tail to form protofilaments running lengthwise along the microtubule wall with the beta-tubulin subunit facing the microtubule plus end conferring a structural polarity. Microtubules usually have 13 protofilaments but different protofilament numbers can be found in some organisms and specialized cells. Requires Mg(2+) as cofactor.

Its subcellular location is the cytoplasm. The protein resides in the cytoskeleton. Its function is as follows. Tubulin is the major constituent of microtubules, a cylinder consisting of laterally associated linear protofilaments composed of alpha- and beta-tubulin heterodimers. Microtubules grow by the addition of GTP-tubulin dimers to the microtubule end, where a stabilizing cap forms. Below the cap, tubulin dimers are in GDP-bound state, owing to GTPase activity of alpha-tubulin. This is Tubulin beta chain from Naegleria pringsheimi (Amoeba).